Consider the following 158-residue polypeptide: ATP synthase subunit b' (158 aa).

Residues 24–44 (ATLPLMAVQILVLVFLLNAVF) form a helical membrane-spanning segment.

The protein belongs to the ATPase B chain family. F-type ATPases have 2 components, F(1) - the catalytic core - and F(0) - the membrane proton channel. F(1) has five subunits: alpha(3), beta(3), gamma(1), delta(1), epsilon(1). F(0) has four main subunits: a(1), b(1), b'(1) and c(10-14). The alpha and beta chains form an alternating ring which encloses part of the gamma chain. F(1) is attached to F(0) by a central stalk formed by the gamma and epsilon chains, while a peripheral stalk is formed by the delta, b and b' chains.

It localises to the cellular thylakoid membrane. Its function is as follows. F(1)F(0) ATP synthase produces ATP from ADP in the presence of a proton or sodium gradient. F-type ATPases consist of two structural domains, F(1) containing the extramembraneous catalytic core and F(0) containing the membrane proton channel, linked together by a central stalk and a peripheral stalk. During catalysis, ATP synthesis in the catalytic domain of F(1) is coupled via a rotary mechanism of the central stalk subunits to proton translocation. Component of the F(0) channel, it forms part of the peripheral stalk, linking F(1) to F(0). The b'-subunit is a diverged and duplicated form of b found in plants and photosynthetic bacteria. In Synechococcus elongatus (strain ATCC 33912 / PCC 7942 / FACHB-805) (Anacystis nidulans R2), this protein is ATP synthase subunit b'.